We begin with the raw amino-acid sequence, 683 residues long: PTS system mannose-specific EIIBCA component (683 aa).

Positions 1 to 89 (MASKLTTTSQ…LKLDGMKHFA (89 aa)) constitute a PTS EIIB type-1 domain. C28 (phosphocysteine intermediate; for EIIB activity) is an active-site residue. The PTS EIIC type-1 domain occupies 117 to 476 (EFLSDTFRPI…NEERDEARAK (360 aa)). 10 consecutive transmembrane segments (helical) span residues 126–146 (ILWALLGASLIITLLVLADTF), 162–182 (YVFLHSMWRSVFYFLPIMVGA), 193–213 (WIGAAIPAALLTPEFLALGSA), 225–245 (VLNDYSGQVFPPLIAAIGLYW), 260–280 (MVFVPFFSLLIMIPATAFLLG), 303–323 (FILSIVIPLLYPFLVPLGLHW), 344–364 (PMGAWNFACFGLVTGVFLLSI), 376–396 (LGGMLAGLLGGISEPSLYGVL), 409–429 (GCLAGGIVMGIFDIKAYAFVF), and 442–462 (LGYTIGIAVAFFVSMFLVLAL). The 105-residue stretch at 550 to 654 (DPIFAAGKLG…PLITPVVVSN (105 aa)) folds into the PTS EIIA type-1 domain. Residue H602 is the Tele-phosphohistidine intermediate; for EIIA activity of the active site.

The protein resides in the cell membrane. The enzyme catalyses D-mannose(out) + N(pros)-phospho-L-histidyl-[protein] = D-mannose 6-phosphate(in) + L-histidyl-[protein]. Its function is as follows. The phosphoenolpyruvate-dependent sugar phosphotransferase system (sugar PTS), a major carbohydrate active -transport system, catalyzes the phosphorylation of incoming sugar substrates concomitantly with their translocation across the cell membrane. This system is involved in mannose transport. The polypeptide is PTS system mannose-specific EIIBCA component (ptsM) (Corynebacterium glutamicum (strain ATCC 13032 / DSM 20300 / JCM 1318 / BCRC 11384 / CCUG 27702 / LMG 3730 / NBRC 12168 / NCIMB 10025 / NRRL B-2784 / 534)).